The chain runs to 506 residues: Ecdysteroid UDP-glucosyltransferase (506 aa).

A signal peptide spans 1–18 (MTILCWLALLSTLTAVNA).

This sequence belongs to the UDP-glycosyltransferase family. Post-translationally, glycosylated.

In terms of biological role, catalyzes the transfer of glucose from UDP-glucose to ecdysteroids which are insect molting hormones. Acts on the host at the organismal level to block its development, thereby increasing the yield of progeny virus. The sequence is that of Ecdysteroid UDP-glucosyltransferase (EGT) from Lepidoptera (butterflies and moths).